Here is a 724-residue protein sequence, read N- to C-terminus: Eukaryotic elongation factor 2 kinase (724 aa).

A2 is modified (N-acetylalanine). Residue S27 is modified to Phosphoserine. S61 carries the post-translational modification Phosphoserine; by autocatalysis. Residues S70, S73, and S77 each carry the phosphoserine modification. The segment at 80–93 (FKEAWKHAIEKAKH) is calmodulin-binding. One can recognise an Alpha-type protein kinase domain in the interval 115–325 (RYNAVTGEWL…ICQSMGLTPF (211 aa)). The residue at position 242 (S242) is a Phosphoserine. 295–301 (GDGNLGV) contacts ATP. Phosphothreonine; by autocatalysis occurs at positions 347 and 352. Residues 353–476 (EEKCGSPRIR…HESDEDSLGS (124 aa)) are disordered. S358 carries the phosphoserine; by MAPK13 and CDK1 modification. The span at 358-376 (SPRIRTLSSSRPPLLLRLS) shows a compositional bias: low complexity. S365 carries the post-translational modification Phosphoserine; by autocatalysis, RPS6KA1 and RPS6KB1. A compositionally biased stretch (polar residues) spans 385 to 403 (SDVTFDSLPSSPSSATPHS). Residue S391 is modified to Phosphoserine. S397 is modified (phosphoserine; by AMPK). 2 stretches are compositionally biased toward basic and acidic residues: residues 421–435 (GPRD…RDSE) and 444–469 (SEKR…RHES). 3 positions are modified to phosphoserine: S434, S444, and S469. The residue at position 473 (S473) is a Phosphoserine; by autocatalysis. S476 is modified (phosphoserine). S499 is modified (phosphoserine; by PKA).

Belongs to the protein kinase superfamily. Alpha-type protein kinase family. Monomer or homodimer. Interacts with Calmodulin/CALM1; this interaction is strictly required for phosphorylation activity. Autophosphorylated at multiple residues, Thr-347 being the major site. Phosphorylated by AMP-activated protein kinase AMPK at Ser-397 leading to EEF2K activation and protein synthesis inhibition. Phosphorylated by TRPM7 at Ser-77 resulting in improved protein stability, higher EE2F phosphorylated and subsequently reduced rate of protein synthesis. Phosphorylation by other kinases such as CDK1 and MAPK13 at Ser-358 or RPS6KA1 and RPS6KB1 at Ser-365 instead decrease EEF2K activity and promote protein synthesis. Ubiquitously expressed. Particularly abundant in skeletal muscle and heart.

It carries out the reaction [translation elongation factor 2] + ATP = [translation elongation factor 2]-phosphate + ADP + H(+). With respect to regulation, undergoes calcium/calmodulin-dependent intramolecular autophosphorylation, and this results in it becoming partially calcium/calmodulin-independent. Its function is as follows. Threonine kinase that regulates protein synthesis by controlling the rate of peptide chain elongation. Upon activation by a variety of upstream kinases including AMPK or TRPM7, phosphorylates the elongation factor EEF2 at a single site, renders it unable to bind ribosomes and thus inactive. In turn, the rate of protein synthesis is reduced. This is Eukaryotic elongation factor 2 kinase (Eef2k) from Mus musculus (Mouse).